The chain runs to 318 residues: Ubiquitin-like domain-containing CTD phosphatase 1 (318 aa).

Residues 3-81 (LSLIIKWGGQ…IMMMGTREES (79 aa)) enclose the Ubiquitin-like domain. The FCP1 homology domain maps to 133-294 (PREGKKLLVL…VKLSQYLKEI (162 aa)). Mg(2+) contacts are provided by D143, D145, and D253.

Mg(2+) serves as cofactor.

The protein localises to the nucleus. The enzyme catalyses O-phospho-L-seryl-[protein] + H2O = L-seryl-[protein] + phosphate. It catalyses the reaction O-phospho-L-threonyl-[protein] + H2O = L-threonyl-[protein] + phosphate. Dephosphorylates 26S nuclear proteasomes, thereby decreasing their proteolytic activity. Recruited to the 19S regulatory particle of the 26S proteasome where it dephosphorylates 19S component psmc2 which impairs psmc2 ATPase activity and disrupts 26S proteasome assembly. Has also been reported to stimulate the proteolytic activity of the 26S proteasome. This Xenopus laevis (African clawed frog) protein is Ubiquitin-like domain-containing CTD phosphatase 1 (ublcp1).